A 461-amino-acid polypeptide reads, in one-letter code: Putative dipeptidase CPSG_01350 (461 aa).

Basic and acidic residues predominate over residues 1 to 10; the sequence is MSARDNEKGS. Positions 1–31 are disordered; the sequence is MSARDNEKGSARSQPSHAAASEIENVPRPSR. Residues 35–52 form a helical membrane-spanning segment; sequence WTGTMIKVFIICACAGIV. Positions 90, 92, and 203 each coordinate Zn(2+). Cysteines 142 and 232 form a disulfide. Histidine 230 is a substrate binding site. Residues histidine 274 and histidine 295 each coordinate Zn(2+). The substrate site is built by arginine 306 and aspartate 366. N-linked (GlcNAc...) asparagine glycosylation is present at asparagine 379.

The protein belongs to the metallo-dependent hydrolases superfamily. Peptidase M19 family. Zn(2+) serves as cofactor.

It localises to the membrane. It carries out the reaction an L-aminoacyl-L-amino acid + H2O = 2 an L-alpha-amino acid. Its function is as follows. Hydrolyzes a wide range of dipeptides. The polypeptide is Putative dipeptidase CPSG_01350 (Coccidioides posadasii (strain RMSCC 757 / Silveira) (Valley fever fungus)).